The chain runs to 37 residues: Delta-amaurobitoxin-Pl1a (37 aa).

Disulfide bonds link C2-C18, C9-C23, C17-C33, and C25-C31. Residue S37 is modified to Serine amide.

The protein belongs to the neurotoxin 07 (Beta/delta-agtx) family. 02 (aga-3) subfamily. In terms of tissue distribution, expressed by the venom gland.

The protein localises to the secreted. In terms of biological role, binds at site 4 of sodium channels (Nav) and inhibits the fast inactivation of cockroach channels. This toxin is active only on insects. Has a potent activity against S.litura larvae. The protein is Delta-amaurobitoxin-Pl1a of Pireneitega luctuosa (Tangled nest spider).